The chain runs to 128 residues: Large ribosomal subunit protein eL22 (128 aa).

A Phosphothreonine modification is found at Thr62. A Phosphoserine modification is found at Ser66. Lys69 is modified (N6-succinyllysine).

This sequence belongs to the eukaryotic ribosomal protein eL22 family. As to quaternary structure, component of the large ribosomal subunit.

It localises to the cytoplasm. In terms of biological role, component of the large ribosomal subunit. The ribosome is a large ribonucleoprotein complex responsible for the synthesis of proteins in the cell. The chain is Large ribosomal subunit protein eL22 (RPL22) from Sus scrofa (Pig).